A 510-amino-acid chain; its full sequence is D-alanine--D-alanyl carrier protein ligase (510 aa).

Position 157-158 (157-158 (TS)) interacts with ATP. Residue aspartate 202 coordinates D-alanine. 297 to 302 (NTYGPT) provides a ligand contact to ATP. Valine 306 contributes to the D-alanine binding site. Residues aspartate 389 and lysine 498 each coordinate ATP. Residue lysine 498 participates in D-alanine binding.

Belongs to the ATP-dependent AMP-binding enzyme family. DltA subfamily.

The protein resides in the cytoplasm. The enzyme catalyses holo-[D-alanyl-carrier protein] + D-alanine + ATP = D-alanyl-[D-alanyl-carrier protein] + AMP + diphosphate. The protein operates within cell wall biogenesis; lipoteichoic acid biosynthesis. Its function is as follows. Catalyzes the first step in the D-alanylation of lipoteichoic acid (LTA), the activation of D-alanine and its transfer onto the D-alanyl carrier protein (Dcp) DltC. In an ATP-dependent two-step reaction, forms a high energy D-alanyl-AMP intermediate, followed by transfer of the D-alanyl residue as a thiol ester to the phosphopantheinyl prosthetic group of the Dcp. D-alanylation of LTA plays an important role in modulating the properties of the cell wall in Gram-positive bacteria, influencing the net charge of the cell wall. In Listeria innocua serovar 6a (strain ATCC BAA-680 / CLIP 11262), this protein is D-alanine--D-alanyl carrier protein ligase.